The sequence spans 82 residues: Chaplin-E (82 aa).

The N-terminal stretch at 1-27 is a signal peptide; the sequence is MKNLKKAAAVTMVAGGLIAAGAGMASA. In terms of domain architecture, Chaplin spans 41–81; that stretch reads SPGVASGNLVQAPIHIPVNAVGNSVNVIGVLNPAFGNLGVN.

It belongs to the chaplin family. Short chaplin subfamily.

The protein resides in the cell surface. Its subcellular location is the secreted. It localises to the cell wall. The protein localises to the fimbrium. Its function is as follows. One of 8 partially redundant surface-active proteins required for efficient formation of aerial mycelium; the short chaplins assemble into a hydrophobic, amyloidal fibrillar surface layer that envelopes and protects aerial hyphae and spores, presumably anchored to the long chaplins. Chaplins have an overlapping function with the surface-active SapB peptide; chaplins are essential on minimal medium while on rich medium both chaplins and SapB are required for efficient aerial hyphae formation. Chaplins are also involved in cell attachment to a hydrophobic surface. Forms amyloid fibrils in vitro probably composed of stacked beta-sheets, at low extracellular concentrations individually restores the ability to form aerial hyphae to a chaplin-deficient strain, but does so less well than other short chaplins. A small chaplin extract (ChpD, ChpE, ChpF, ChpG and ChpH) self-assembles into 2 different amyloids; small fibrils at the air-water interface form an amphipathic membrane that resembles spore-surface structures involved in aerial hyphae formation, and hydrophilic fibrils in solution that resemble the fibers that attach cells to a hydrophobic surface. At the air-water interface the hydrophilic surface is in contact with water (probably equivalent to the peptidoglycan layer), while the hydrophobic face is exposed to the air, making the surface of the aerial hyphae hydrophobic. A minimal chaplin strain capable of forming aerial mycelium/hyphae on minimal medium contains ChpC, ChpE and ChpH. The strain also has restored rodlet formation on the hyphae surface. A second strain with ChpA, ChpD and ChpE makes slightly less robust hyphae. This essential chaplin may coordinate the assembly and/or polymerization of the other chaplins. A small chaplin extract applied to a chaplin-deficient strain restores aerial hyphae formation. The small chaplin extract forms an amyloid-like structure similar to that seen on the surface of cells without rodlets (rdlA-rdlB deletions), and is highly surface active, reducing surface tension from 72 to 26 mJ/m(2), which probably allows escape of hyphae from an aqueous environment into air. This chain is Chaplin-E, found in Streptomyces coelicolor (strain ATCC BAA-471 / A3(2) / M145).